Here is a 290-residue protein sequence, read N- to C-terminus: Elongation factor Ts (290 aa).

An involved in Mg(2+) ion dislocation from EF-Tu region spans residues 87–90; the sequence is TDFV.

It belongs to the EF-Ts family.

It localises to the cytoplasm. Functionally, associates with the EF-Tu.GDP complex and induces the exchange of GDP to GTP. It remains bound to the aminoacyl-tRNA.EF-Tu.GTP complex up to the GTP hydrolysis stage on the ribosome. This chain is Elongation factor Ts (tsf), found in Treponema pallidum (strain Nichols).